Consider the following 176-residue polypeptide: Nucleoside triphosphate/diphosphate phosphatase (176 aa).

Catalysis depends on Arg23, which acts as the Proton donor. Mg(2+) is bound by residues Asn87, Asp103, Asp105, Asp107, Asp120, and Glu123.

Belongs to the Ntdp family. Requires Mg(2+) as cofactor.

The enzyme catalyses a ribonucleoside 5'-triphosphate + H2O = a ribonucleoside 5'-diphosphate + phosphate + H(+). The catalysed reaction is a ribonucleoside 5'-diphosphate + H2O = a ribonucleoside 5'-phosphate + phosphate + H(+). In terms of biological role, has nucleoside phosphatase activity towards nucleoside triphosphates and nucleoside diphosphates. In Bacillus anthracis (strain A0248), this protein is Nucleoside triphosphate/diphosphate phosphatase.